Here is a 355-residue protein sequence, read N- to C-terminus: UPF0421 protein BCE33L2478 (355 aa).

4 helical membrane-spanning segments follow: residues 19–39 (IAVF…IFAV), 74–94 (FTFF…FTIV), 109–129 (TLTA…AFLI), and 131–151 (LATT…ILPP).

This sequence belongs to the UPF0421 family.

It localises to the cell membrane. This is UPF0421 protein BCE33L2478 from Bacillus cereus (strain ZK / E33L).